The chain runs to 78 residues: MTEADQVRKRINELYKKKQESGLTEVEEAERKELHKQFIANFRAGFKQQLDSLVIVDDQGKDVTPDKAKQIQKKKVLR.

Belongs to the UPF0291 family.

The protein localises to the cytoplasm. The protein is UPF0291 protein LBUL_1264 of Lactobacillus delbrueckii subsp. bulgaricus (strain ATCC BAA-365 / Lb-18).